The primary structure comprises 253 residues: Small ribosomal subunit protein uS3 (253 aa).

One can recognise a KH type-2 domain in the interval 39–109 (IRNYVLARLK…EVKIDVVEVI (71 aa)). Positions 220–253 (DEMKKMKDRRNDGGAKGRDSRDNRSKRRSRSKRS) are disordered. The segment covering 221-242 (EMKKMKDRRNDGGAKGRDSRDN) has biased composition (basic and acidic residues). Residues 243-253 (RSKRRSRSKRS) are compositionally biased toward basic residues.

This sequence belongs to the universal ribosomal protein uS3 family. In terms of assembly, part of the 30S ribosomal subunit. Forms a tight complex with proteins S10 and S14.

Binds the lower part of the 30S subunit head. Binds mRNA in the 70S ribosome, positioning it for translation. The sequence is that of Small ribosomal subunit protein uS3 from Chlorobium chlorochromatii (strain CaD3).